Here is a 376-residue protein sequence, read N- to C-terminus: 3-dehydroquinate synthase (376 aa).

Residues 115 to 119 (GVIGD), 139 to 140 (TS), Lys152, and Lys161 each bind NAD(+). Zn(2+)-binding residues include Glu194, His256, and His275.

The protein belongs to the sugar phosphate cyclases superfamily. Dehydroquinate synthase family. It depends on Co(2+) as a cofactor. Zn(2+) is required as a cofactor. NAD(+) serves as cofactor.

Its subcellular location is the cytoplasm. It carries out the reaction 7-phospho-2-dehydro-3-deoxy-D-arabino-heptonate = 3-dehydroquinate + phosphate. It participates in metabolic intermediate biosynthesis; chorismate biosynthesis; chorismate from D-erythrose 4-phosphate and phosphoenolpyruvate: step 2/7. Functionally, catalyzes the conversion of 3-deoxy-D-arabino-heptulosonate 7-phosphate (DAHP) to dehydroquinate (DHQ). This is 3-dehydroquinate synthase from Rhizobium etli (strain CIAT 652).